Here is a 351-residue protein sequence, read N- to C-terminus: UDP-glucose 4-epimerase 5 (351 aa).

Residues 13–15 (GYI), 34–38 (DNLDN), 64–65 (DL), phenylalanine 86, and lysine 90 each bind NAD(+). Residue 130 to 132 (SAT) participates in substrate binding. The active-site Proton acceptor is the tyrosine 154. Residues lysine 158 and tyrosine 182 each coordinate NAD(+). Substrate contacts are provided by residues 182–184 (YFN), 203–205 (NNL), 221–223 (TVF), arginine 236, and 298–301 (RPGD).

It belongs to the NAD(P)-dependent epimerase/dehydratase family. In terms of assembly, forms homodimers and heterodimers. NAD(+) is required as a cofactor. As to expression, widely expressed.

It catalyses the reaction UDP-alpha-D-glucose = UDP-alpha-D-galactose. Its pathway is carbohydrate metabolism; galactose metabolism. Its activity is regulated as follows. Enhanced activity by NaCl. Inhibited by UDP. In terms of biological role, catalyzes the interconversion between UDP-glucose and UDP-galactose. In Arabidopsis thaliana (Mouse-ear cress), this protein is UDP-glucose 4-epimerase 5.